The sequence spans 447 residues: Tubulin beta chain (447 aa).

GTP is bound by residues Gln-11, Glu-69, Ser-138, Gly-142, Thr-143, Gly-144, Asn-204, and Asn-226. Residue Glu-69 participates in Mg(2+) binding. The interval 424 to 447 is disordered; it reads QYQDASISEGEEDYEEEPQVENEE. Residues 432–447 show a composition bias toward acidic residues; that stretch reads EGEEDYEEEPQVENEE.

Belongs to the tubulin family. Dimer of alpha and beta chains. A typical microtubule is a hollow water-filled tube with an outer diameter of 25 nm and an inner diameter of 15 nM. Alpha-beta heterodimers associate head-to-tail to form protofilaments running lengthwise along the microtubule wall with the beta-tubulin subunit facing the microtubule plus end conferring a structural polarity. Microtubules usually have 13 protofilaments but different protofilament numbers can be found in some organisms and specialized cells. Mg(2+) is required as a cofactor.

It localises to the cytoplasm. The protein resides in the cytoskeleton. Tubulin is the major constituent of microtubules, a cylinder consisting of laterally associated linear protofilaments composed of alpha- and beta-tubulin heterodimers. Microtubules grow by the addition of GTP-tubulin dimers to the microtubule end, where a stabilizing cap forms. Below the cap, tubulin dimers are in GDP-bound state, owing to GTPase activity of alpha-tubulin. This is Tubulin beta chain from Uncinula necator (Grape powdery mildew).